Reading from the N-terminus, the 678-residue chain is Penicillin-binding protein activator LpoA (678 aa).

The N-terminal stretch at Met-1 to Gly-26 is a signal peptide. The N-palmitoyl cysteine moiety is linked to residue Cys-27. A lipid anchor (S-diacylglycerol cysteine) is attached at Cys-27. Disordered stretches follow at residues Asp-302 to Ala-340 and Ala-496 to Phe-528. 2 stretches are compositionally biased toward low complexity: residues Gln-330–Ala-340 and Thr-513–Phe-528.

It belongs to the LpoA family. As to quaternary structure, interacts with PBP1a.

Its subcellular location is the cell outer membrane. In terms of biological role, regulator of peptidoglycan synthesis that is essential for the function of penicillin-binding protein 1A (PBP1a). In Shigella sonnei (strain Ss046), this protein is Penicillin-binding protein activator LpoA.